The following is a 668-amino-acid chain: Golgin candidate 2 (668 aa).

The tract at residues 22 to 317 (QAADSLRKDE…RQREERRRRR (296 aa)) is disordered. A compositionally biased stretch (basic and acidic residues) spans 26 to 39 (SLRKDEKSETHDEV). Composition is skewed to polar residues over residues 64–86 (GSDS…LSSS) and 100–113 (SAPS…NTKL). Low complexity-rich tracts occupy residues 123 to 141 (STPN…GGTS) and 168 to 178 (SSSSNVVNSRG). Composition is skewed to basic and acidic residues over residues 184–207 (TNKE…RNAP), 215–237 (THKE…RRSA), and 250–259 (GKRDGRESRR). The span at 290 to 302 (DESESDYESDSST) shows a compositional bias: acidic residues. The span at 303-312 (DSERERQREE) shows a compositional bias: basic and acidic residues. Residues 331–539 (AVIKERENMV…SQVEALSSEK (209 aa)) are a coiled coil. A run of 2 helical transmembrane segments spans residues 594 to 614 (KHLG…TVFL) and 622 to 642 (IWAV…LLSH).

The protein resides in the golgi apparatus membrane. Its function is as follows. Golgi matrix protein playing a role in tethering of vesicles to Golgi membranes and in maintaining the overall structure of the Golgi apparatus. This Arabidopsis thaliana (Mouse-ear cress) protein is Golgin candidate 2 (GC2).